Here is a 91-residue protein sequence, read N- to C-terminus: Non-specific lipid-transfer protein 1 (91 aa).

4 cysteine pairs are disulfide-bonded: Cys-4–Cys-51, Cys-14–Cys-28, Cys-29–Cys-74, and Cys-49–Cys-88.

As to expression, detected in seeds (at protein level).

Plant non-specific lipid-transfer proteins transfer phospholipids as well as galactolipids across membranes. May play a role in wax or cutin deposition in the cell walls of expanding epidermal cells and certain secretory tissues. This is Non-specific lipid-transfer protein 1 from Trachyspermum ammi (Ajowan caraway).